The chain runs to 459 residues: Exodeoxyribonuclease 7 large subunit (459 aa).

The protein belongs to the XseA family. Heterooligomer composed of large and small subunits.

It is found in the cytoplasm. The catalysed reaction is Exonucleolytic cleavage in either 5'- to 3'- or 3'- to 5'-direction to yield nucleoside 5'-phosphates.. In terms of biological role, bidirectionally degrades single-stranded DNA into large acid-insoluble oligonucleotides, which are then degraded further into small acid-soluble oligonucleotides. This is Exodeoxyribonuclease 7 large subunit from Yersinia pestis bv. Antiqua (strain Antiqua).